The chain runs to 199 residues: LIM domain-containing protein E (199 aa).

Positions 5–65 (VKCGACAKTA…PVHTPKVSAT (61 aa)) constitute an LIM zinc-binding domain. Positions 134 to 199 (YAVFGADGQP…EEEQQYEEEQ (66 aa)) are disordered. Low complexity-rich tracts occupy residues 146–155 (EQQEQQQYTE) and 163–174 (EEQQYQEEQQQY). The segment covering 175 to 199 (QEEEQQYQEEEQQYQEEEQQYEEEQ) has biased composition (acidic residues).

In terms of assembly, may interact with rac1A.

Its subcellular location is the cytoplasm. The protein resides in the cell cortex. The protein localises to the nucleus. It localises to the cell projection. It is found in the lamellipodium. Its subcellular location is the filopodium. The protein resides in the cytoskeleton. Its function is as follows. Associates with the actin cytoskeleton and may regulate actin polymerization in lamellipodia, through a rac1-dependent signaling pathway. May play a role in cell motility. Involved in cytokinesis by regulating the microtubule system and linking it to the cortical actin network. In Dictyostelium discoideum (Social amoeba), this protein is LIM domain-containing protein E (limE).